Reading from the N-terminus, the 161-residue chain is uncharacterized protein (161 aa).

This sequence to R.leguminosarum PsiB.

This is an uncharacterized protein from Sinorhizobium fredii (strain NBRC 101917 / NGR234).